A 536-amino-acid polypeptide reads, in one-letter code: Testis-specific protein 10-interacting protein (536 aa).

Disordered regions lie at residues 1–94 (MLNT…LFSS), 185–234 (SQGL…PGQG), and 246–305 (MEEE…FKGP). Positions 48–64 (SGDSLQSQSCQQQRSYS) are enriched in low complexity. The segment covering 71–83 (KERKPRRRNKKGR) has biased composition (basic residues). Positions 375 to 451 (QAWEQQQLKE…LQGIQHRVQA (77 aa)) form a coiled coil. A disordered region spans residues 491–536 (GNAEGIPRKHRSYRSFGVEMESSPQSPPKTEPTSSQPGRHPSPTLD).

The protein is Testis-specific protein 10-interacting protein (Tsga10ip) of Rattus norvegicus (Rat).